We begin with the raw amino-acid sequence, 407 residues long: Tryptophan synthase beta chain (407 aa).

Lys-98 carries the N6-(pyridoxal phosphate)lysine modification.

Belongs to the TrpB family. As to quaternary structure, tetramer of two alpha and two beta chains. Pyridoxal 5'-phosphate serves as cofactor.

The catalysed reaction is (1S,2R)-1-C-(indol-3-yl)glycerol 3-phosphate + L-serine = D-glyceraldehyde 3-phosphate + L-tryptophan + H2O. It functions in the pathway amino-acid biosynthesis; L-tryptophan biosynthesis; L-tryptophan from chorismate: step 5/5. Functionally, the beta subunit is responsible for the synthesis of L-tryptophan from indole and L-serine. In Bradyrhizobium sp. (strain ORS 278), this protein is Tryptophan synthase beta chain.